The sequence spans 157 residues: Phosphopantetheine adenylyltransferase (157 aa).

S8 contributes to the substrate binding site. ATP-binding positions include 8–9 (SF) and H16. Substrate is bound by residues K40, T72, and R86. Residues 87-89 (GLR), E97, and 122-128 (HSFLSSS) contribute to the ATP site.

It belongs to the bacterial CoaD family. As to quaternary structure, homohexamer. Mg(2+) serves as cofactor.

The protein localises to the cytoplasm. The catalysed reaction is (R)-4'-phosphopantetheine + ATP + H(+) = 3'-dephospho-CoA + diphosphate. Its pathway is cofactor biosynthesis; coenzyme A biosynthesis; CoA from (R)-pantothenate: step 4/5. In terms of biological role, reversibly transfers an adenylyl group from ATP to 4'-phosphopantetheine, yielding dephospho-CoA (dPCoA) and pyrophosphate. The chain is Phosphopantetheine adenylyltransferase from Prochlorococcus marinus (strain MIT 9313).